The following is a 363-amino-acid chain: UDP-N-acetylglucosamine--N-acetylmuramyl-(pentapeptide) pyrophosphoryl-undecaprenol N-acetylglucosamine transferase (363 aa).

Residues 10-12, Asn-124, Ser-195, Ile-250, and Gln-295 each bind UDP-N-acetyl-alpha-D-glucosamine; that span reads TGG.

It belongs to the glycosyltransferase 28 family. MurG subfamily.

The protein resides in the cell membrane. It carries out the reaction di-trans,octa-cis-undecaprenyl diphospho-N-acetyl-alpha-D-muramoyl-L-alanyl-D-glutamyl-meso-2,6-diaminopimeloyl-D-alanyl-D-alanine + UDP-N-acetyl-alpha-D-glucosamine = di-trans,octa-cis-undecaprenyl diphospho-[N-acetyl-alpha-D-glucosaminyl-(1-&gt;4)]-N-acetyl-alpha-D-muramoyl-L-alanyl-D-glutamyl-meso-2,6-diaminopimeloyl-D-alanyl-D-alanine + UDP + H(+). It participates in cell wall biogenesis; peptidoglycan biosynthesis. Functionally, cell wall formation. Catalyzes the transfer of a GlcNAc subunit on undecaprenyl-pyrophosphoryl-MurNAc-pentapeptide (lipid intermediate I) to form undecaprenyl-pyrophosphoryl-MurNAc-(pentapeptide)GlcNAc (lipid intermediate II). This is UDP-N-acetylglucosamine--N-acetylmuramyl-(pentapeptide) pyrophosphoryl-undecaprenol N-acetylglucosamine transferase from Listeria monocytogenes serotype 4b (strain CLIP80459).